An 85-amino-acid polypeptide reads, in one-letter code: Small ribosomal subunit protein bS20 (85 aa).

This sequence belongs to the bacterial ribosomal protein bS20 family.

Functionally, binds directly to 16S ribosomal RNA. In Lactobacillus johnsonii (strain CNCM I-12250 / La1 / NCC 533), this protein is Small ribosomal subunit protein bS20.